Here is a 719-residue protein sequence, read N- to C-terminus: Potassium-transporting ATPase ATP-binding subunit (719 aa).

The next 4 helical transmembrane spans lie at 35-55 (LFVV…PGLF), 62-82 (VYYA…NYAE), 228-248 (ILLS…FFFG), and 254-274 (FVGG…VALM). The active-site 4-aspartylphosphate intermediate is aspartate 318. Residues aspartate 355 and glutamate 359 each coordinate ATP. Residues 372-396 (GKVQTDGGQSASEELDEPGDSVDAP) form a disordered region. A compositionally biased stretch (polar residues) spans 373–383 (KVQTDGGQSAS). ATP contacts are provided by residues 416–423 (FSAETRMS) and lysine 435. Residues aspartate 554 and aspartate 558 each coordinate Mg(2+). 3 helical membrane-spanning segments follow: residues 624–644 (FVLL…MDIL), 652–672 (AVTA…PLAL), and 698–718 (LIAP…LGVF).

The protein belongs to the cation transport ATPase (P-type) (TC 3.A.3) family. Type IA subfamily. The system is composed of three essential subunits: KdpA, KdpB and KdpC. The complex also contains KdpF, a small non-essential subunit.

It localises to the cell membrane. The catalysed reaction is K(+)(out) + ATP + H2O = K(+)(in) + ADP + phosphate + H(+). Part of the high-affinity ATP-driven potassium transport (or Kdp) system, which catalyzes the hydrolysis of ATP coupled with the electrogenic transport of potassium into the cytoplasm. This subunit is responsible for energy coupling to the transport system and for the release of the potassium ions to the cytoplasm. The Kdp system is essential for growth under K(+) limitation, and for survival under desiccation and salt crystal inclusion. The protein is Potassium-transporting ATPase ATP-binding subunit of Halobacterium salinarum (strain ATCC 29341 / DSM 671 / R1).